We begin with the raw amino-acid sequence, 217 residues long: Small ribosomal subunit protein uS3 (217 aa).

One can recognise a KH type-2 domain in the interval 38–106 (IRQLIQTKLA…QVHINIVEIK (69 aa)).

Belongs to the universal ribosomal protein uS3 family. In terms of assembly, part of the 30S ribosomal subunit. Forms a tight complex with proteins S10 and S14.

Binds the lower part of the 30S subunit head. Binds mRNA in the 70S ribosome, positioning it for translation. This is Small ribosomal subunit protein uS3 from Lactococcus lactis subsp. lactis (strain IL1403) (Streptococcus lactis).